A 186-amino-acid chain; its full sequence is MIRELEYYGSHILRRKADIIPEITDTIRQLVQDMYETMVAHKGVGLAAPQVGESLSLFVVCVEGETEDGDLIFCDFPKVYINPVLSNASEDLVIGREGCLSIPGLRADVYRPQSITVTALNLDGQEFTEHLEGFPARIIMHENDHLHGVLYIDKMEEPKDIKKFKASLEKIRRRYHAHVKPEDRAS.

Positions 99 and 141 each coordinate Fe cation. Glutamate 142 is an active-site residue. A Fe cation-binding site is contributed by histidine 145.

It belongs to the polypeptide deformylase family. Fe(2+) serves as cofactor.

The enzyme catalyses N-terminal N-formyl-L-methionyl-[peptide] + H2O = N-terminal L-methionyl-[peptide] + formate. In terms of biological role, removes the formyl group from the N-terminal Met of newly synthesized proteins. Requires at least a dipeptide for an efficient rate of reaction. N-terminal L-methionine is a prerequisite for activity but the enzyme has broad specificity at other positions. The polypeptide is Peptide deformylase (Chlamydia felis (strain Fe/C-56) (Chlamydophila felis)).